A 288-amino-acid chain; its full sequence is Bifunctional protein FolD 2 (288 aa).

NADP(+)-binding positions include 166–168 (GRS) and Ser-191.

Belongs to the tetrahydrofolate dehydrogenase/cyclohydrolase family. In terms of assembly, homodimer.

The enzyme catalyses (6R)-5,10-methylene-5,6,7,8-tetrahydrofolate + NADP(+) = (6R)-5,10-methenyltetrahydrofolate + NADPH. It carries out the reaction (6R)-5,10-methenyltetrahydrofolate + H2O = (6R)-10-formyltetrahydrofolate + H(+). It functions in the pathway one-carbon metabolism; tetrahydrofolate interconversion. Functionally, catalyzes the oxidation of 5,10-methylenetetrahydrofolate to 5,10-methenyltetrahydrofolate and then the hydrolysis of 5,10-methenyltetrahydrofolate to 10-formyltetrahydrofolate. In Myxococcus xanthus (strain DK1622), this protein is Bifunctional protein FolD 2.